A 21-amino-acid chain; its full sequence is Glucose-1-phosphate adenylyltransferase large subunit (21 aa).

Residues 1–21 are disordered; the sequence is SVTADNASETKVREIGQEKSS. Basic and acidic residues predominate over residues 8–21; the sequence is SETKVREIGQEKSS.

The protein belongs to the bacterial/plant glucose-1-phosphate adenylyltransferase family. As to quaternary structure, heterotetramer.

It is found in the plastid. The protein localises to the chloroplast. The protein resides in the amyloplast. It catalyses the reaction alpha-D-glucose 1-phosphate + ATP + H(+) = ADP-alpha-D-glucose + diphosphate. It functions in the pathway glycan biosynthesis; starch biosynthesis. With respect to regulation, activated by 3'phosphoglycerate, inhibited by orthophosphate. Allosteric regulation. This protein plays a role in synthesis of starch. It catalyzes the synthesis of the activated glycosyl donor, ADP-glucose from Glc-1-P and ATP. This is Glucose-1-phosphate adenylyltransferase large subunit from Spinacia oleracea (Spinach).